The chain runs to 399 residues: Putative endoplasmin-like protein (399 aa).

Lysine 130 participates in a covalent cross-link: Glycyl lysine isopeptide (Lys-Gly) (interchain with G-Cter in SUMO2). Positions 350–399 are disordered; sequence LDLAVVEEPDEEPEETAEDKEQDKDKEMDVGTDEEKQETAKESTAEKDEL. The segment covering 354 to 367 has biased composition (acidic residues); the sequence is VVEEPDEEPEETAE. Residues 368–399 are compositionally biased toward basic and acidic residues; it reads DKEQDKDKEMDVGTDEEKQETAKESTAEKDEL.

It belongs to the heat shock protein 90 family.

Functionally, putative molecular chaperone. The protein is Putative endoplasmin-like protein (HSP90B2P) of Homo sapiens (Human).